Here is a 56-residue protein sequence, read N- to C-terminus: Large ribosomal subunit protein bL33 (56 aa).

The protein belongs to the bacterial ribosomal protein bL33 family.

In Vibrio campbellii (strain ATCC BAA-1116), this protein is Large ribosomal subunit protein bL33.